We begin with the raw amino-acid sequence, 1460 residues long: Ankyrin repeat-containing protein kinase A (1460 aa).

7 disordered regions span residues 1-32, 57-181, 216-259, 272-311, 329-354, 374-510, and 551-608; these read MSIK…NINI, IKQQ…HKSH, RENE…ASST, STSN…VEFD, SSPS…TSTS, FTPS…SSNP, and CPSA…SSIP. Low complexity-rich tracts occupy residues 8–32, 61–86, and 111–128; these read SNIN…NINI, SNNN…PTSH, and SSGS…NNNN. Positions 129–140 are enriched in polar residues; sequence QIKTSNGMNKPN. The span at 149-162 shows a compositional bias: basic and acidic residues; it reads KPRENSQNKIDDNK. Composition is skewed to low complexity over residues 220–259 and 272–300; these read NNNN…ASST and STSN…RSTS. Composition is skewed to polar residues over residues 329–345 and 384–404; these read SSPS…VHMP and PTNS…TIQP. The span at 405-422 shows a compositional bias: low complexity; it reads SSLDSSSESVSDGLQSVS. Residues 423-434 are compositionally biased toward polar residues; sequence GSPVTASPSPTI. The segment covering 435–461 has biased composition (low complexity); that stretch reads SNNTNATTTNNNNNTNTNNNNNNNNNQ. Over residues 462 to 472 the composition is skewed to basic residues; that stretch reads HNHHHHQHSHS. Residues 467-667 form an interaction with 14-3-3 protein region; sequence HQHSHSQQHD…IFRGCGIPLD (201 aa). Positions 486–497 are enriched in low complexity; sequence PSSPTSPTLLPS. The segment at 499 to 551 adopts a Phorbol-ester/DAG-type zinc-finger fold; sequence THDFSSEYSSNPGGKCAICRKPLWSFPISDKSRRCRDCSLVVHRACVPLATEC. Over residues 559–568 the composition is skewed to polar residues; the sequence is SKLSVPNGNQ. Over residues 569-608 the composition is skewed to low complexity; it reads SNSSSSSSSSSSSSSSSNSSSSNTKGHSRTPSSPSVSSIP. The region spanning 653 to 724 is the GRAM domain; sequence RDFHFIFRGC…SNIASIEKRS (72 aa). 5 ANK repeats span residues 814–843, 852–883, 887–920, 924–955, and 959–988; these read SKEI…QVNS, KGYT…RVRE, DGNT…NINE, NGET…NVNI, and AGES…DPTI. The Protein kinase domain occupies 1112-1375; sequence LEYTEKIGSG…ATEAMTALAV (264 aa). ATP-binding positions include 1118–1126 and Lys1139; that span reads IGSGASGKV. Asp1231 acts as the Proton acceptor in catalysis. A helical transmembrane segment spans residues 1293–1313; sequence MGIVMWEIVYCVVYGCYMIPY. A coiled-coil region spans residues 1425 to 1460; that stretch reads PEEEQIYQEAMEKQRRNQEASANRNQKNKELLNNNN. The interval 1434–1460 is disordered; that stretch reads AMEKQRRNQEASANRNQKNKELLNNNN.

It belongs to the protein kinase superfamily. TKL Ser/Thr protein kinase family.

The protein localises to the cytoplasm. It is found in the cytoskeleton. The protein resides in the membrane. It localises to the nucleus. It catalyses the reaction L-seryl-[protein] + ATP = O-phospho-L-seryl-[protein] + ADP + H(+). The enzyme catalyses L-threonyl-[protein] + ATP = O-phospho-L-threonyl-[protein] + ADP + H(+). Its function is as follows. Involved in the development of the fruiting body. Overexpression phenocopies the spnA null phenotype. The polypeptide is Ankyrin repeat-containing protein kinase A (arkA) (Dictyostelium discoideum (Social amoeba)).